A 335-amino-acid polypeptide reads, in one-letter code: DNA-directed RNA polymerase subunit alpha (335 aa).

The alpha N-terminal domain (alpha-NTD) stretch occupies residues 1-233 (MIRDKISVSI…DLFIPFLHGE (233 aa)). Residues 264–335 (KEKIAFKHIF…KRFAIDPPRN (72 aa)) are alpha C-terminal domain (alpha-CTD).

It belongs to the RNA polymerase alpha chain family. In terms of assembly, in plastids the minimal PEP RNA polymerase catalytic core is composed of four subunits: alpha, beta, beta', and beta''. When a (nuclear-encoded) sigma factor is associated with the core the holoenzyme is formed, which can initiate transcription.

It is found in the plastid. Its subcellular location is the chloroplast. It carries out the reaction RNA(n) + a ribonucleoside 5'-triphosphate = RNA(n+1) + diphosphate. Functionally, DNA-dependent RNA polymerase catalyzes the transcription of DNA into RNA using the four ribonucleoside triphosphates as substrates. This chain is DNA-directed RNA polymerase subunit alpha, found in Pinus koraiensis (Korean pine).